A 224-amino-acid chain; its full sequence is Ribose-5-phosphate isomerase A (224 aa).

Residues 32–35, 85–88, and 98–101 contribute to the substrate site; these read TGST, DGAD, and KGGG. The Proton acceptor role is filled by Glu107. Lys125 is a substrate binding site.

This sequence belongs to the ribose 5-phosphate isomerase family. Homodimer.

It catalyses the reaction aldehydo-D-ribose 5-phosphate = D-ribulose 5-phosphate. The protein operates within carbohydrate degradation; pentose phosphate pathway; D-ribose 5-phosphate from D-ribulose 5-phosphate (non-oxidative stage): step 1/1. Its function is as follows. Catalyzes the reversible conversion of ribose-5-phosphate to ribulose 5-phosphate. The polypeptide is Ribose-5-phosphate isomerase A (Pseudomonas fluorescens (strain Pf0-1)).